Here is a 263-residue protein sequence, read N- to C-terminus: Purine nucleoside phosphorylase SACOL1200 (263 aa).

The Zn(2+) site is built by histidine 79, cysteine 124, and histidine 141.

It belongs to the purine nucleoside phosphorylase YfiH/LACC1 family. In terms of assembly, homodimer. Requires Cu(2+) as cofactor. The cofactor is Zn(2+).

It catalyses the reaction adenosine + phosphate = alpha-D-ribose 1-phosphate + adenine. The enzyme catalyses S-methyl-5'-thioadenosine + phosphate = 5-(methylsulfanyl)-alpha-D-ribose 1-phosphate + adenine. The catalysed reaction is inosine + phosphate = alpha-D-ribose 1-phosphate + hypoxanthine. It carries out the reaction adenosine + H2O + H(+) = inosine + NH4(+). Its function is as follows. Purine nucleoside enzyme that catalyzes the phosphorolysis of adenosine and inosine nucleosides, yielding D-ribose 1-phosphate and the respective free bases, adenine and hypoxanthine. Also catalyzes the phosphorolysis of S-methyl-5'-thioadenosine into adenine and S-methyl-5-thio-alpha-D-ribose 1-phosphate. Also has adenosine deaminase activity. The sequence is that of Purine nucleoside phosphorylase SACOL1200 from Staphylococcus aureus (strain COL).